The sequence spans 251 residues: tRNA (guanine-N(1)-)-methyltransferase (251 aa).

S-adenosyl-L-methionine-binding positions include G114 and 134 to 139 (IGDYVL).

It belongs to the RNA methyltransferase TrmD family. In terms of assembly, homodimer.

Its subcellular location is the cytoplasm. The enzyme catalyses guanosine(37) in tRNA + S-adenosyl-L-methionine = N(1)-methylguanosine(37) in tRNA + S-adenosyl-L-homocysteine + H(+). Functionally, specifically methylates guanosine-37 in various tRNAs. The protein is tRNA (guanine-N(1)-)-methyltransferase of Pelotomaculum thermopropionicum (strain DSM 13744 / JCM 10971 / SI).